The chain runs to 132 residues: Small ribosomal subunit protein uS8 (132 aa).

Belongs to the universal ribosomal protein uS8 family. As to quaternary structure, part of the 30S ribosomal subunit. Contacts proteins S5 and S12.

Its function is as follows. One of the primary rRNA binding proteins, it binds directly to 16S rRNA central domain where it helps coordinate assembly of the platform of the 30S subunit. The sequence is that of Small ribosomal subunit protein uS8 from Francisella tularensis subsp. holarctica (strain FTNF002-00 / FTA).